A 294-amino-acid polypeptide reads, in one-letter code: Lycopene elongase/hydratase (294 aa).

A run of 8 helical transmembrane segments spans residues 31–51 (FWLY…DGPG), 53–73 (LFSP…NVFL), 115–135 (LALL…LAWM), 160–180 (GLYI…APPA), 182–202 (AVVG…IPDI), 222–242 (TYYY…FTHW), 243–263 (VFGV…GVGV), and 274–294 (AINT…MLYG).

It belongs to the UbiA prenyltransferase family.

It localises to the cell membrane. It carries out the reaction all-trans-lycopene + dimethylallyl diphosphate + H2O = dihydroisopentenyldehydrorhodopin + diphosphate. The enzyme catalyses isopentenyldehydrorhodopin + dimethylallyl diphosphate + H2O = dihydrobisanhydrobacterioruberin + diphosphate. It functions in the pathway carotenoid biosynthesis. Functionally, involved in the biosynthesis of the acyclic C50 carotenoid bacterioruberin (BR). Acts as a bifunctional elongase/hydratase that catalyzes the elongation of lycopene by attaching a C(5) isoprene unit at C-2, as well as the hydroxylation of the previous end of the molecule. The enzyme acts at both ends of the substrate, and catalyzes the conversion of lycopene to the C(45) intermediate dihydroisopentenyldehydrorhodopin (DH-IDR) and the conversion of isopentenyldehydrorhodopin (IDR) to the C(50) carotenoid dihydrobisanhydrobacterioruberin (DH-BABR). Can also catalyze the conversion of lycopene to tetrahydrobisanhydrobacterioruberin (TH-BABR). The protein is Lycopene elongase/hydratase of Haloarcula japonica (strain ATCC 49778 / DSM 6131 / JCM 7785 / NBRC 101032 / NCIMB 13157 / TR-1).